The sequence spans 364 residues: Aminomethyltransferase (364 aa).

Belongs to the GcvT family. As to quaternary structure, the glycine cleavage system is composed of four proteins: P, T, L and H.

It catalyses the reaction N(6)-[(R)-S(8)-aminomethyldihydrolipoyl]-L-lysyl-[protein] + (6S)-5,6,7,8-tetrahydrofolate = N(6)-[(R)-dihydrolipoyl]-L-lysyl-[protein] + (6R)-5,10-methylene-5,6,7,8-tetrahydrofolate + NH4(+). The glycine cleavage system catalyzes the degradation of glycine. The polypeptide is Aminomethyltransferase (Shigella boydii serotype 18 (strain CDC 3083-94 / BS512)).